The chain runs to 169 residues: Lipoprotein signal peptidase (169 aa).

4 consecutive transmembrane segments (helical) span residues 15–35, 47–67, 75–95, and 107–127; these read WLWLAIVIFLADIGIKYVVMN, ILPFFNLLYVHNYGAAFSFLS, WLFTGIAFVVTGLLTYWMSKL, and AMIIGGAVGNVFDRVIHGFVV. Catalysis depends on residues Asp128 and Asp146. A helical transmembrane segment spans residues 141 to 161; sequence AFNLADMAICLGAAMIILDGF.

This sequence belongs to the peptidase A8 family.

The protein resides in the cell inner membrane. The enzyme catalyses Release of signal peptides from bacterial membrane prolipoproteins. Hydrolyzes -Xaa-Yaa-Zaa-|-(S,diacylglyceryl)Cys-, in which Xaa is hydrophobic (preferably Leu), and Yaa (Ala or Ser) and Zaa (Gly or Ala) have small, neutral side chains.. The protein operates within protein modification; lipoprotein biosynthesis (signal peptide cleavage). Functionally, this protein specifically catalyzes the removal of signal peptides from prolipoproteins. This Vibrio parahaemolyticus serotype O3:K6 (strain RIMD 2210633) protein is Lipoprotein signal peptidase.